Reading from the N-terminus, the 226-residue chain is ATP synthase F(0) complex subunit a (226 aa).

6 helical membrane-spanning segments follow: residues 5–25 (LFAP…LIII), 68–88 (WSLM…LGML), 97–117 (QLSM…ATGF), 136–156 (FLIP…PVAL), 179–199 (LVLM…LALL), and 201–221 (ILEF…VSLY).

The protein belongs to the ATPase A chain family. As to quaternary structure, component of the ATP synthase complex composed at least of ATP5F1A/subunit alpha, ATP5F1B/subunit beta, ATP5MC1/subunit c (homooctomer), MT-ATP6/subunit a, MT-ATP8/subunit 8, ATP5ME/subunit e, ATP5MF/subunit f, ATP5MG/subunit g, ATP5MK/subunit k, ATP5MJ/subunit j, ATP5F1C/subunit gamma, ATP5F1D/subunit delta, ATP5F1E/subunit epsilon, ATP5PF/subunit F6, ATP5PB/subunit b, ATP5PD/subunit d, ATP5PO/subunit OSCP. ATP synthase complex consists of a soluble F(1) head domain (subunits alpha(3) and beta(3)) - the catalytic core - and a membrane F(0) domain - the membrane proton channel (subunits c, a, 8, e, f, g, k and j). These two domains are linked by a central stalk (subunits gamma, delta, and epsilon) rotating inside the F1 region and a stationary peripheral stalk (subunits F6, b, d, and OSCP). Interacts with DNAJC30; interaction is direct.

The protein resides in the mitochondrion inner membrane. It catalyses the reaction H(+)(in) = H(+)(out). Subunit a, of the mitochondrial membrane ATP synthase complex (F(1)F(0) ATP synthase or Complex V) that produces ATP from ADP in the presence of a proton gradient across the membrane which is generated by electron transport complexes of the respiratory chain. ATP synthase complex consist of a soluble F(1) head domain - the catalytic core - and a membrane F(1) domain - the membrane proton channel. These two domains are linked by a central stalk rotating inside the F(1) region and a stationary peripheral stalk. During catalysis, ATP synthesis in the catalytic domain of F(1) is coupled via a rotary mechanism of the central stalk subunits to proton translocation. With the subunit c (ATP5MC1), forms the proton-conducting channel in the F(0) domain, that contains two crucial half-channels (inlet and outlet) that facilitate proton movement from the mitochondrial intermembrane space (IMS) into the matrix. Protons are taken up via the inlet half-channel and released through the outlet half-channel, following a Grotthuss mechanism. This chain is ATP synthase F(0) complex subunit a, found in Balaenoptera musculus (Blue whale).